The chain runs to 441 residues: uncharacterized protein (441 aa).

11 helical membrane-spanning segments follow: residues 68–88 (MAIA…GPFA), 110–130 (ALIA…PLLV), 131–151 (GALV…AALP), 164–184 (SVAI…MLLP), 194–214 (GASA…LWSL), 229–246 (AIHG…LHGA), 260–280 (SGLA…LLLV), 287–307 (AVGG…GAFL), 337–357 (VAAA…LGVA), 384–404 (VQDA…AALI), and 412–432 (VFVL…TIVG).

It belongs to the major facilitator superfamily.

The protein localises to the cell membrane. This is an uncharacterized protein from Mycobacterium tuberculosis (strain ATCC 25618 / H37Rv).